The chain runs to 133 residues: uncharacterized protein (133 aa).

Positions 1–22 (MYRSSISIQVFICVLFLPLDSG) are cleaved as a signal peptide. N-linked (GlcNAc...) asparagine glycosylation occurs at Asn111.

Its subcellular location is the secreted. This is an uncharacterized protein from Saccharomyces cerevisiae (strain ATCC 204508 / S288c) (Baker's yeast).